A 266-amino-acid polypeptide reads, in one-letter code: NADP-dependent mannitol dehydrogenase (266 aa).

NADP(+) contacts are provided by Ser-53, Asn-107, and Lys-140. The active-site Proton donor is the Ser-159. The NADP(+) site is built by Tyr-174, Lys-178, Ile-206, and Thr-208. Catalysis depends on Tyr-174, which acts as the Proton acceptor. The Lowers pKa of active site Tyr role is filled by Lys-178.

Belongs to the short-chain dehydrogenases/reductases (SDR) family. Homotetramer.

It carries out the reaction D-mannitol + NADP(+) = D-fructose + NADPH + H(+). Its function is as follows. D-mannitol 2-dehydrogenase which is not necessary for D-mannitol catabolism. D-mannitol metabolism occurs via at least two different routes involving mannitol dehydrogenase (MDH) or mannitol 1-phosphate dehydrogenase, and the exact physiological role of mannitol dehydrogenases remains unclear. The sequence is that of NADP-dependent mannitol dehydrogenase from Hypocrea jecorina (strain ATCC 56765 / BCRC 32924 / NRRL 11460 / Rut C-30) (Trichoderma reesei).